Here is a 49-residue protein sequence, read N- to C-terminus: Large ribosomal subunit protein bL33C (49 aa).

The protein belongs to the bacterial ribosomal protein bL33 family.

The polypeptide is Large ribosomal subunit protein bL33C (Lactococcus lactis subsp. cremoris (strain MG1363)).